Consider the following 207-residue polypeptide: MPKVALYNNEGSQVGEITLDDSIFATDINETLMHEAVNMHLASKRRGTASAKTRSEVRGGGRKPWRQKGTGRARHGSIRSPIWVGGGISFAPKPRDYSYKMPKKAKRKAIKSALTTKLNNGEIVILEELTMEAPKTKKIIEMLENLSINHKAMIVTGASDLNVYRSTRNIPGVSSALANNLNVYDVLNHDYLVLTKDAVSVIEEVFC.

Residues 44 to 76 form a disordered region; the sequence is KRRGTASAKTRSEVRGGGRKPWRQKGTGRARHG. A compositionally biased stretch (basic residues) spans 60-76; that stretch reads GGRKPWRQKGTGRARHG.

It belongs to the universal ribosomal protein uL4 family. Part of the 50S ribosomal subunit.

One of the primary rRNA binding proteins, this protein initially binds near the 5'-end of the 23S rRNA. It is important during the early stages of 50S assembly. It makes multiple contacts with different domains of the 23S rRNA in the assembled 50S subunit and ribosome. Its function is as follows. Forms part of the polypeptide exit tunnel. The polypeptide is Large ribosomal subunit protein uL4 (Natranaerobius thermophilus (strain ATCC BAA-1301 / DSM 18059 / JW/NM-WN-LF)).